A 466-amino-acid chain; its full sequence is ATP synthase subunit beta (466 aa).

148 to 155 is a binding site for ATP; that stretch reads GGAGVGKT.

Belongs to the ATPase alpha/beta chains family. In terms of assembly, F-type ATPases have 2 components, CF(1) - the catalytic core - and CF(0) - the membrane proton channel. CF(1) has five subunits: alpha(3), beta(3), gamma(1), delta(1), epsilon(1). CF(0) has three main subunits: a(1), b(2) and c(9-12). The alpha and beta chains form an alternating ring which encloses part of the gamma chain. CF(1) is attached to CF(0) by a central stalk formed by the gamma and epsilon chains, while a peripheral stalk is formed by the delta and b chains.

The protein localises to the cell inner membrane. The enzyme catalyses ATP + H2O + 4 H(+)(in) = ADP + phosphate + 5 H(+)(out). In terms of biological role, produces ATP from ADP in the presence of a proton gradient across the membrane. The catalytic sites are hosted primarily by the beta subunits. This is ATP synthase subunit beta from Herminiimonas arsenicoxydans.